A 374-amino-acid chain; its full sequence is Hydroxylysine kinase (374 aa).

The active-site Proton acceptor is D228.

The protein belongs to the aminoglycoside phosphotransferase family.

The protein localises to the cytoplasm. The enzyme catalyses (5R)-5-hydroxy-L-lysine + GTP = (5R)-5-phosphooxy-L-lysine + GDP + H(+). Functionally, catalyzes the GTP-dependent phosphorylation of 5-hydroxy-L-lysine. The polypeptide is Hydroxylysine kinase (hykk) (Xenopus laevis (African clawed frog)).